Reading from the N-terminus, the 70-residue chain is Large ribosomal subunit protein bL33m (70 aa).

This sequence belongs to the bacterial ribosomal protein bL33 family. As to quaternary structure, component of the mitochondrial large ribosomal subunit (mt-LSU). Mature yeast 74S mitochondrial ribosomes consist of a small (37S) and a large (54S) subunit. The 37S small subunit contains a 15S ribosomal RNA (15S mt-rRNA) and 34 different proteins. The 54S large subunit contains a 21S rRNA (21S mt-rRNA) and 46 different proteins. bL33m stabilizes the tRNA acceptor stem in the E-site.

It localises to the mitochondrion. Its function is as follows. Component of the mitochondrial ribosome (mitoribosome), a dedicated translation machinery responsible for the synthesis of mitochondrial genome-encoded proteins, including at least some of the essential transmembrane subunits of the mitochondrial respiratory chain. The mitoribosomes are attached to the mitochondrial inner membrane and translation products are cotranslationally integrated into the membrane. In Saccharomyces cerevisiae (strain ATCC 204508 / S288c) (Baker's yeast), this protein is Large ribosomal subunit protein bL33m (MRPL39).